Here is a 216-residue protein sequence, read N- to C-terminus: 7-carboxy-7-deazaguanine synthase (216 aa).

Residues leucine 12 to glycine 14 and arginine 27 each bind substrate. The region spanning arginine 18–proline 216 is the Radical SAM core domain. The [4Fe-4S] cluster site is built by cysteine 31, cysteine 46, and cysteine 49. Residue threonine 51 participates in Mg(2+) binding. Threonine 93 contributes to the substrate binding site. S-adenosyl-L-methionine contacts are provided by residues glycine 95, serine 136–lysine 138, and glutamine 176–aspartate 179. Proline 216 lines the substrate pocket.

Belongs to the radical SAM superfamily. 7-carboxy-7-deazaguanine synthase family. Homodimer. It depends on [4Fe-4S] cluster as a cofactor. Requires S-adenosyl-L-methionine as cofactor. Mg(2+) is required as a cofactor.

The catalysed reaction is 6-carboxy-5,6,7,8-tetrahydropterin + H(+) = 7-carboxy-7-deazaguanine + NH4(+). It participates in purine metabolism; 7-cyano-7-deazaguanine biosynthesis. Functionally, catalyzes the complex heterocyclic radical-mediated conversion of 6-carboxy-5,6,7,8-tetrahydropterin (CPH4) to 7-carboxy-7-deazaguanine (CDG), a step common to the biosynthetic pathways of all 7-deazapurine-containing compounds. The protein is 7-carboxy-7-deazaguanine synthase of Nitratidesulfovibrio vulgaris (strain ATCC 29579 / DSM 644 / CCUG 34227 / NCIMB 8303 / VKM B-1760 / Hildenborough) (Desulfovibrio vulgaris).